A 298-amino-acid chain; its full sequence is MNNLQTQFPHIAIKLNEPLSKYTYTKTGGEADVFVMPKTIEEAQEVVAYCHQNKIPLTILGNGSNLIIKDGGIRGVILHLDLLQTIERNNTQIIAMSGAKLIDTAKFALDESLSGLEFACGIPGSIGGALHMNAGAYGGEISDVLEAATVLTQTGELKKLKRSELKAAYRFSTIAEKNYIVLDATFSLALEEKNLIQAKMDELTAAREAKQPLEYPSCGSVFKRPPGHFAGKLIQDSGLQGHIIGGAQVSLKHAGFIVNIGGATATDYMNLIAYVQKTVREKFDVELETEVKIIGEDK.

Residues 27 to 191 (TGGEADVFVM…LDATFSLALE (165 aa)) form the FAD-binding PCMH-type domain. Arg-170 is an active-site residue. The Proton donor role is filled by Ser-220. Glu-290 is a catalytic residue.

It belongs to the MurB family. Requires FAD as cofactor.

Its subcellular location is the cytoplasm. The enzyme catalyses UDP-N-acetyl-alpha-D-muramate + NADP(+) = UDP-N-acetyl-3-O-(1-carboxyvinyl)-alpha-D-glucosamine + NADPH + H(+). The protein operates within cell wall biogenesis; peptidoglycan biosynthesis. Cell wall formation. The chain is UDP-N-acetylenolpyruvoylglucosamine reductase from Listeria monocytogenes serotype 4a (strain HCC23).